The chain runs to 143 residues: MPAKKKVAAVVKVAPQAGQATPAPPVGMALGPHGVNIMEFCKAYNAQTEGQRGNIVPVEITIYEDRTFSFVLKTPPAAELIKKAAGIKKGTENPATHKVGKISKDQVREIAETKMPDLNANDIEAAMKIVAGTARSMGVEVEV.

It belongs to the universal ribosomal protein uL11 family. In terms of assembly, part of the ribosomal stalk of the 50S ribosomal subunit. Interacts with L10 and the large rRNA to form the base of the stalk. L10 forms an elongated spine to which L12 dimers bind in a sequential fashion forming a multimeric L10(L12)X complex. One or more lysine residues are methylated.

Its function is as follows. Forms part of the ribosomal stalk which helps the ribosome interact with GTP-bound translation factors. The protein is Large ribosomal subunit protein uL11 of Cutibacterium acnes (strain DSM 16379 / KPA171202) (Propionibacterium acnes).